We begin with the raw amino-acid sequence, 83 residues long: Sulfur carrier protein TusA (83 aa).

Cys-19 (cysteine persulfide intermediate) is an active-site residue.

It belongs to the sulfur carrier protein TusA family.

It localises to the cytoplasm. Functionally, sulfur carrier protein which probably makes part of a sulfur-relay system. This Vibrio atlanticus (strain LGP32) (Vibrio splendidus (strain Mel32)) protein is Sulfur carrier protein TusA.